We begin with the raw amino-acid sequence, 245 residues long: Orotidine 5'-phosphate decarboxylase (245 aa).

Substrate-binding positions include D22, K44, 71 to 80 (DLKFHDIPNT), T131, R192, Q201, G221, and R222. The active-site Proton donor is the K73.

It belongs to the OMP decarboxylase family. Type 1 subfamily. As to quaternary structure, homodimer.

It catalyses the reaction orotidine 5'-phosphate + H(+) = UMP + CO2. Its pathway is pyrimidine metabolism; UMP biosynthesis via de novo pathway; UMP from orotate: step 2/2. Its function is as follows. Catalyzes the decarboxylation of orotidine 5'-monophosphate (OMP) to uridine 5'-monophosphate (UMP). The polypeptide is Orotidine 5'-phosphate decarboxylase (Escherichia coli (strain K12 / MC4100 / BW2952)).